Reading from the N-terminus, the 611-residue chain is Solute carrier family 23 member 3 (611 aa).

Topologically, residues 1-52 are cytoplasmic; sequence MSRSPLHPIPLLSEGYQDTPAPLPPLLPPLQNPSSRSWASRVFGPSTWGLSC. A helical transmembrane segment spans residues 53–73; it reads LLALQHFLVLASLLWASHLLL. Residues 74–88 are Extracellular-facing; the sequence is LHGLPPGGLSYPPAQ. Residues 89-109 traverse the membrane as a helical segment; it reads LLASSFFSCGLSTVLQTWMGS. Over 110 to 168 the chain is Cytoplasmic; the sequence is RLPLIQAPSLEFLIPALVLTNQKLPLTTKTPGNASLSLPLCSLTRSCHGLELWNTSLRE. The chain crosses the membrane as a helical span at residues 169–189; sequence VSGAVVVSGLLQGTIGLLGVP. At 190 to 191 the chain is on the extracellular side; it reads GR. Residues 192–212 traverse the membrane as a helical segment; the sequence is VFPYCGPLVLAPSLVVAGLSA. Over 213-215 the chain is Cytoplasmic; it reads HKE. Residues 216 to 236 form a helical membrane-spanning segment; it reads VAQFCSAHWGLALLLILLMVV. At 237–269 the chain is on the extracellular side; that stretch reads CSQHLGSCQIPLCSWRPSSTSTHICIPVFRLLS. The helical transmembrane segment at 270–290 threads the bilayer; that stretch reads VLAPVACVWFISAFVGTSVIP. At 291–319 the chain is on the cytoplasmic side; sequence LQLSEPSDAPWFWLPHPGEWEWPLLTPRA. Residues 320 to 340 traverse the membrane as a helical segment; sequence LAAGISMALAASTSSLGCYAL. Residues 341-358 are Extracellular-facing; sequence CGQLLRLSPPPPHACSRG. A helical membrane pass occupies residues 359 to 379; that stretch reads LSLEGLGSVLAGLLGSPLGTA. The Cytoplasmic portion of the chain corresponds to 380 to 397; it reads SSFPNVGTVSLFQTGSRR. The chain crosses the membrane as a helical span at residues 398 to 417; sequence VAHLVGLFCMGLGLSPRLAQ. Over 418–426 the chain is Extracellular; it reads LFTSIPLPV. The chain crosses the membrane as a helical span at residues 427 to 449; that stretch reads LGGVLGVTQAVVLSAGFSSFHLA. The Cytoplasmic portion of the chain corresponds to 450 to 455; that stretch reads DIDSGR. The helical transmembrane segment at 456 to 475 threads the bilayer; the sequence is NVFIVGFSIFMALLLPRWLR. Topologically, residues 476–489 are extracellular; sequence EAPVLLNTGWSPLD. Residues 490 to 510 form a helical membrane-spanning segment; it reads MFLRSLLAEPIFLAGLLGFLL. The Cytoplasmic portion of the chain corresponds to 511 to 611; sequence ENTISGTRAE…TASREGVRSQ (101 aa). Residues 574 to 611 form a disordered region; sequence PEDSGDEGGSSKTGERADLLPNSGESYSTASREGVRSQ. Residues 596 to 605 are compositionally biased toward polar residues; it reads SGESYSTASR.

This sequence belongs to the nucleobase:cation symporter-2 (NCS2) (TC 2.A.40) family.

Its subcellular location is the membrane. The protein localises to the cytoplasm. It carries out the reaction hypoxanthine(out) + Na(+)(out) = hypoxanthine(in) + Na(+)(in). In terms of biological role, acts as a sodium-dependent hypoxanthine transporter. May show xanthine-hypoxanthine exchange activity. The sequence is that of Solute carrier family 23 member 3 (Slc23a3) from Mus musculus (Mouse).